We begin with the raw amino-acid sequence, 114 residues long: T cell receptor beta variable 5-1 (114 aa).

Residues 1-21 form the signal peptide; the sequence is MGSRLLCWVLLCLLGAGPVKA. The region spanning 22–114 is the Ig-like domain; sequence GVTQTPRYLI…SALYLCASSL (93 aa). C42 and C110 are joined by a disulfide. An N-linked (GlcNAc...) asparagine glycan is attached at N96.

In terms of assembly, alpha-beta TR is a heterodimer composed of an alpha and beta chain; disulfide-linked. The alpha-beta TR is associated with the transmembrane signaling CD3 coreceptor proteins to form the TR-CD3 (TcR or TCR). The assembly of alpha-beta TR heterodimers with CD3 occurs in the endoplasmic reticulum where a single alpha-beta TR heterodimer associates with one CD3D-CD3E heterodimer, one CD3G-CD3E heterodimer and one CD247 homodimer forming a stable octameric structure. CD3D-CD3E and CD3G-CD3E heterodimers preferentially associate with TR alpha and TR beta chains, respectively. The association of the CD247 homodimer is the last step of TcR assembly in the endoplasmic reticulum and is required for transport to the cell surface.

It localises to the cell membrane. In terms of biological role, v region of the variable domain of T cell receptor (TR) beta chain that participates in the antigen recognition. Alpha-beta T cell receptors are antigen specific receptors which are essential to the immune response and are present on the cell surface of T lymphocytes. Recognize peptide-major histocompatibility (MH) (pMH) complexes that are displayed by antigen presenting cells (APC), a prerequisite for efficient T cell adaptive immunity against pathogens. Binding of alpha-beta TR to pMH complex initiates TR-CD3 clustering on the cell surface and intracellular activation of LCK that phosphorylates the ITAM motifs of CD3G, CD3D, CD3E and CD247 enabling the recruitment of ZAP70. In turn ZAP70 phosphorylates LAT, which recruits numerous signaling molecules to form the LAT signalosome. The LAT signalosome propagates signal branching to three major signaling pathways, the calcium, the mitogen-activated protein kinase (MAPK) kinase and the nuclear factor NF-kappa-B (NF-kB) pathways, leading to the mobilization of transcription factors that are critical for gene expression and essential for T cell growth and differentiation. The T cell repertoire is generated in the thymus, by V-(D)-J rearrangement. This repertoire is then shaped by intrathymic selection events to generate a peripheral T cell pool of self-MH restricted, non-autoaggressive T cells. Post-thymic interaction of alpha-beta TR with the pMH complexes shapes TR structural and functional avidity. The chain is T cell receptor beta variable 5-1 from Homo sapiens (Human).